Reading from the N-terminus, the 176-residue chain is NADH-quinone oxidoreductase subunit B 1 (176 aa).

Positions 55, 56, 120, and 150 each coordinate [4Fe-4S] cluster.

This sequence belongs to the complex I 20 kDa subunit family. In terms of assembly, NDH-1 is composed of 14 different subunits. Subunits NuoB, C, D, E, F, and G constitute the peripheral sector of the complex. It depends on [4Fe-4S] cluster as a cofactor.

Its subcellular location is the cell inner membrane. The enzyme catalyses a quinone + NADH + 5 H(+)(in) = a quinol + NAD(+) + 4 H(+)(out). NDH-1 shuttles electrons from NADH, via FMN and iron-sulfur (Fe-S) centers, to quinones in the respiratory chain. Couples the redox reaction to proton translocation (for every two electrons transferred, four hydrogen ions are translocated across the cytoplasmic membrane), and thus conserves the redox energy in a proton gradient. The protein is NADH-quinone oxidoreductase subunit B 1 of Cereibacter sphaeroides (strain ATCC 17029 / ATH 2.4.9) (Rhodobacter sphaeroides).